Here is a 343-residue protein sequence, read N- to C-terminus: Ferrochelatase (343 aa).

2 residues coordinate Fe cation: histidine 211 and glutamate 292.

The protein belongs to the ferrochelatase family.

The protein resides in the cytoplasm. The catalysed reaction is heme b + 2 H(+) = protoporphyrin IX + Fe(2+). It participates in porphyrin-containing compound metabolism; protoheme biosynthesis; protoheme from protoporphyrin-IX: step 1/1. Functionally, catalyzes the ferrous insertion into protoporphyrin IX. In Gluconobacter oxydans (strain 621H) (Gluconobacter suboxydans), this protein is Ferrochelatase.